A 125-amino-acid polypeptide reads, in one-letter code: Large ribosomal subunit protein bL12 (125 aa).

This sequence belongs to the bacterial ribosomal protein bL12 family. As to quaternary structure, homodimer. Part of the 50S ribosomal subunit; present in 6 copies per ribosome. Forms part of the ribosomal stalk which helps the ribosome interact with GTP-bound translation factors. Forms a heptameric L10(L12)2(L12)2(L12)2 complex, where L10 forms an elongated spine to which 3 L12 dimers bind in a sequential fashion.

Functionally, forms part of the ribosomal stalk which helps the ribosome interact with GTP-bound translation factors. Is thus essential for accurate translation. This Agrobacterium fabrum (strain C58 / ATCC 33970) (Agrobacterium tumefaciens (strain C58)) protein is Large ribosomal subunit protein bL12.